Reading from the N-terminus, the 506-residue chain is Deoxyguanosinetriphosphate triphosphohydrolase (506 aa).

The region spanning 66–274 is the HD domain; the sequence is RLTHSLEVQQ…MEAADDISYC (209 aa).

The protein belongs to the dGTPase family. Type 1 subfamily. Homotetramer. It depends on Mg(2+) as a cofactor.

It catalyses the reaction dGTP + H2O = 2'-deoxyguanosine + triphosphate + H(+). Its function is as follows. dGTPase preferentially hydrolyzes dGTP over the other canonical NTPs. The sequence is that of Deoxyguanosinetriphosphate triphosphohydrolase from Yersinia pseudotuberculosis serotype O:3 (strain YPIII).